Here is a 305-residue protein sequence, read N- to C-terminus: GTPase Era (305 aa).

The Era-type G domain occupies arginine 13–glutamate 181. Residues glycine 21 to serine 28 form a G1 region. Glycine 21–serine 28 serves as a coordination point for GTP. A G2 region spans residues glutamine 47–histidine 51. The tract at residues aspartate 68–glycine 71 is G3. GTP contacts are provided by residues aspartate 68 to leucine 72 and asparagine 130 to aspartate 133. Residues asparagine 130–aspartate 133 are G4. The G5 stretch occupies residues isoleucine 160–alanine 162. Positions valine 204–glycine 288 constitute a KH type-2 domain.

It belongs to the TRAFAC class TrmE-Era-EngA-EngB-Septin-like GTPase superfamily. Era GTPase family. Monomer.

It is found in the cytoplasm. It localises to the cell inner membrane. An essential GTPase that binds both GDP and GTP, with rapid nucleotide exchange. Plays a role in 16S rRNA processing and 30S ribosomal subunit biogenesis and possibly also in cell cycle regulation and energy metabolism. In Pseudomonas aeruginosa (strain LESB58), this protein is GTPase Era.